We begin with the raw amino-acid sequence, 532 residues long: Light-independent protochlorophyllide reductase subunit B (532 aa).

D36 is a binding site for [4Fe-4S] cluster. D282 serves as the catalytic Proton donor. 417–418 (GL) provides a ligand contact to substrate.

Belongs to the ChlB/BchB/BchZ family. In terms of assembly, protochlorophyllide reductase is composed of three subunits; BchL, BchN and BchB. Forms a heterotetramer of two BchB and two BchN subunits. [4Fe-4S] cluster serves as cofactor.

The catalysed reaction is chlorophyllide a + oxidized 2[4Fe-4S]-[ferredoxin] + 2 ADP + 2 phosphate = protochlorophyllide a + reduced 2[4Fe-4S]-[ferredoxin] + 2 ATP + 2 H2O. It participates in porphyrin-containing compound metabolism; bacteriochlorophyll biosynthesis (light-independent). Its function is as follows. Component of the dark-operative protochlorophyllide reductase (DPOR) that uses Mg-ATP and reduced ferredoxin to reduce ring D of protochlorophyllide (Pchlide) to form chlorophyllide a (Chlide). This reaction is light-independent. The NB-protein (BchN-BchB) is the catalytic component of the complex. In Methylobacterium radiotolerans (strain ATCC 27329 / DSM 1819 / JCM 2831 / NBRC 15690 / NCIMB 10815 / 0-1), this protein is Light-independent protochlorophyllide reductase subunit B.